Reading from the N-terminus, the 114-residue chain is Fluoride-specific ion channel FluC 2 (114 aa).

4 consecutive transmembrane segments (helical) span residues 3–23 (YVII…ECWL), 31–51 (LMTA…WILA), 57–77 (GIEL…TFCM), and 92–112 (MIYL…GWNV). Residues glycine 67 and threonine 70 each contribute to the Na(+) site.

It belongs to the fluoride channel Fluc/FEX (TC 1.A.43) family.

It is found in the cell membrane. It catalyses the reaction fluoride(in) = fluoride(out). Na(+) is not transported, but it plays an essential structural role and its presence is essential for fluoride channel function. In terms of biological role, fluoride-specific ion channel. Important for reducing fluoride concentration in the cell, thus reducing its toxicity. The protein is Fluoride-specific ion channel FluC 2 of Shouchella clausii (strain KSM-K16) (Alkalihalobacillus clausii).